The following is a 576-amino-acid chain: Sulfite reductase [NADPH] hemoprotein beta-component (576 aa).

The [4Fe-4S] cluster site is built by cysteine 439, cysteine 445, cysteine 485, and cysteine 489. Cysteine 489 is a siroheme binding site.

It belongs to the nitrite and sulfite reductase 4Fe-4S domain family. Alpha(8)-beta(8). The alpha component is a flavoprotein, the beta component is a hemoprotein. Requires siroheme as cofactor. [4Fe-4S] cluster serves as cofactor.

The catalysed reaction is hydrogen sulfide + 3 NADP(+) + 3 H2O = sulfite + 3 NADPH + 4 H(+). The protein operates within sulfur metabolism; hydrogen sulfide biosynthesis; hydrogen sulfide from sulfite (NADPH route): step 1/1. Its function is as follows. Component of the sulfite reductase complex that catalyzes the 6-electron reduction of sulfite to sulfide. This is one of several activities required for the biosynthesis of L-cysteine from sulfate. This chain is Sulfite reductase [NADPH] hemoprotein beta-component, found in Aliivibrio fischeri (strain ATCC 700601 / ES114) (Vibrio fischeri).